The sequence spans 136 residues: Small ribosomal subunit protein uS9 (136 aa).

The disordered stretch occupies residues 111 to 136 (TRDPRMKERKKTGQPGARKRFQFSKR). A compositionally biased stretch (basic residues) spans 117–136 (KERKKTGQPGARKRFQFSKR).

This sequence belongs to the universal ribosomal protein uS9 family.

The polypeptide is Small ribosomal subunit protein uS9 (Methylacidiphilum infernorum (isolate V4) (Methylokorus infernorum (strain V4))).